Here is a 169-residue protein sequence, read N- to C-terminus: ATP-dependent Clp protease adapter protein CLPS2, chloroplastic (169 aa).

A chloroplast-targeting transit peptide spans 1 to 33 (MLATRCKCNLPSRSFVAPARSVRTRALHVEGRF). The tract at residues 67 to 92 (DAKTDNGNNGSNTDKDKKSPPGGGNY) is disordered.

The protein belongs to the ClpS family.

Its subcellular location is the plastid. The protein resides in the chloroplast stroma. Small adapter protein that modulate the activity of plastid Clp protease system (CLPC). Probably involved in substrate selection for plastid CLPC. The chain is ATP-dependent Clp protease adapter protein CLPS2, chloroplastic from Chlamydomonas reinhardtii (Chlamydomonas smithii).